Reading from the N-terminus, the 587-residue chain is 5-aminolevulinate synthase, erythroid-specific, mitochondrial (587 aa).

Residues 1–49 constitute a mitochondrion transit peptide; sequence MVTAAMLLQRCPVLIRSPTGLLGKMIKTHQFLFGIGRCPILATQGPSFS. Arg163 provides a ligand contact to succinyl-CoA. Residues Cys258 and Phe259 each contribute to the pyridoxal 5'-phosphate site. Ser280 and Lys299 together coordinate succinyl-CoA. Pyridoxal 5'-phosphate is bound by residues Ser332, His360, and Thr388. Residue Lys391 is part of the active site. The residue at position 391 (Lys391) is an N6-(pyridoxal phosphate)lysine. Pyridoxal 5'-phosphate is bound by residues Thr420 and Thr421. Position 508 (Thr508) interacts with succinyl-CoA.

This sequence belongs to the class-II pyridoxal-phosphate-dependent aminotransferase family. Homodimer. Interacts with SUCLA2. Pyridoxal 5'-phosphate serves as cofactor.

The protein resides in the mitochondrion inner membrane. It catalyses the reaction succinyl-CoA + glycine + H(+) = 5-aminolevulinate + CO2 + CoA. Its pathway is porphyrin-containing compound metabolism; protoporphyrin-IX biosynthesis; 5-aminolevulinate from glycine: step 1/1. Its function is as follows. Catalyzes the pyridoxal 5'-phosphate (PLP)-dependent condensation of succinyl-CoA and glycine to form aminolevulinic acid (ALA), with CoA and CO2 as by-products. Contributes significantly to heme formation during erythropoiesis. This chain is 5-aminolevulinate synthase, erythroid-specific, mitochondrial (ALAS2), found in Bos taurus (Bovine).